A 194-amino-acid polypeptide reads, in one-letter code: Peptidyl-tRNA hydrolase (194 aa).

Tyrosine 17 lines the tRNA pocket. The Proton acceptor role is filled by histidine 22. Residues tyrosine 68, asparagine 70, and asparagine 116 each contribute to the tRNA site.

Belongs to the PTH family. Monomer.

The protein resides in the cytoplasm. The enzyme catalyses an N-acyl-L-alpha-aminoacyl-tRNA + H2O = an N-acyl-L-amino acid + a tRNA + H(+). Hydrolyzes ribosome-free peptidyl-tRNAs (with 1 or more amino acids incorporated), which drop off the ribosome during protein synthesis, or as a result of ribosome stalling. Functionally, catalyzes the release of premature peptidyl moieties from peptidyl-tRNA molecules trapped in stalled 50S ribosomal subunits, and thus maintains levels of free tRNAs and 50S ribosomes. This is Peptidyl-tRNA hydrolase from Pseudomonas syringae pv. syringae (strain B728a).